A 59-amino-acid chain; its full sequence is uncharacterized protein (59 aa).

This is an uncharacterized protein from Acidianus hospitalis (AFV-1).